The chain runs to 252 residues: MKKVLWIIIIILMVGALAGCGANGQPITAETEGIWNHFFVYPLSWVLISVADLLNGSFGLSIIVVTIGIRLFLLPLMIKQQKSSRAMQALRPEMEALQKKYGQGTKRDPKDQQKMQKELMALYKDSGVNPMAGCLPLFIQLPVMMAFYFAIMRTEVIALHSFLWFDLGSPDPLYILPVVAGITTFLQVKMTSFQLNDQMKVIIYIMPVMIVVAGVTLPSALSLYWVVGNLFMIIQTYFTVVRFEQLKTDISK.

A signal peptide spans 1-19 (MKKVLWIIIIILMVGALAG). Cysteine 20 carries N-palmitoyl cysteine lipidation. Cysteine 20 is lipidated: S-diacylglycerol cysteine. The next 6 membrane-spanning stretches (helical) occupy residues 34–54 (IWNHFFVYPLSWVLISVADLL), 58–78 (FGLSIIVVTIGIRLFLLPLMI), 131–151 (MAGCLPLFIQLPVMMAFYFAI), 162–182 (FLWFDLGSPDPLYILPVVAGI), 201–221 (VIIYIMPVMIVVAGVTLPSAL), and 223–243 (LYWVVGNLFMIIQTYFTVVRF).

Belongs to the OXA1/ALB3/YidC family. Type 2 subfamily.

The protein localises to the cell membrane. Functionally, required for the insertion and/or proper folding and/or complex formation of integral membrane proteins into the membrane. Involved in integration of membrane proteins that insert both dependently and independently of the Sec translocase complex, as well as at least some lipoproteins. The protein is Membrane protein insertase YidC of Alkalihalophilus pseudofirmus (strain ATCC BAA-2126 / JCM 17055 / OF4) (Bacillus pseudofirmus).